A 499-amino-acid chain; its full sequence is Glycerol kinase (499 aa).

An ADP-binding site is contributed by Thr15. Residues Thr15, Thr16, and Ser17 each contribute to the ATP site. Thr15 is a binding site for sn-glycerol 3-phosphate. Arg19 contacts ADP. Arg85, Glu86, Tyr137, and Asp246 together coordinate sn-glycerol 3-phosphate. Glycerol-binding residues include Arg85, Glu86, Tyr137, Asp246, and Gln247. ADP contacts are provided by Thr268 and Gly311. ATP contacts are provided by Thr268, Gly311, Gln315, and Gly412. 2 residues coordinate ADP: Gly412 and Asn416.

The protein belongs to the FGGY kinase family.

The catalysed reaction is glycerol + ATP = sn-glycerol 3-phosphate + ADP + H(+). The protein operates within polyol metabolism; glycerol degradation via glycerol kinase pathway; sn-glycerol 3-phosphate from glycerol: step 1/1. With respect to regulation, inhibited by fructose 1,6-bisphosphate (FBP). Its function is as follows. Key enzyme in the regulation of glycerol uptake and metabolism. Catalyzes the phosphorylation of glycerol to yield sn-glycerol 3-phosphate. The sequence is that of Glycerol kinase from Parabacteroides distasonis (strain ATCC 8503 / DSM 20701 / CIP 104284 / JCM 5825 / NCTC 11152).